A 72-amino-acid polypeptide reads, in one-letter code: MPVQAVCPYCGNRIITVTTFVPGALTWLLCTTLFLFGYVLGCCFLAFCIRSLMDVKHSCPVCQRELFYYHRL.

In terms of domain architecture, LITAF spans 1-71 (MPVQAVCPYC…CQRELFYYHR (71 aa)). Zn(2+) is bound by residues Cys-7 and Cys-10. A membrane-binding amphipathic helix region spans residues 22–45 (PGALTWLLCTTLFLFGYVLGCCFL). Zn(2+)-binding residues include Cys-59 and Cys-62.

The protein belongs to the CDIP1/LITAF family.

It is found in the membrane. The chain is LITAF domain-containing protein from Homo sapiens (Human).